A 57-amino-acid polypeptide reads, in one-letter code: uncharacterized protein (57 aa).

The chain crosses the membrane as a helical span at residues 3–23 (PLTLLIIIGGVILGNELIISL). A disordered region spans residues 38–57 (KHKHKTQENYETFASDKKRT).

Its subcellular location is the host membrane. This is an uncharacterized protein from Acidianus bottle-shaped virus (isolate Italy/Pozzuoli) (ABV).